Here is a 667-residue protein sequence, read N- to C-terminus: Receptor for retinol uptake STRA6 (667 aa).

Over residues 1 to 13 the composition is skewed to polar residues; the sequence is MSSQPAGNQTSPG. Residues 1 to 20 form a disordered region; the sequence is MSSQPAGNQTSPGATEDYSY. Residues 1–50 are Extracellular-facing; it reads MSSQPAGNQTSPGATEDYSYGSWYIDEPQGGEELQPEGEVPSCHTSIPPG. N-linked (GlcNAc...) asparagine glycosylation occurs at asparagine 8. The helical transmembrane segment at 51–71 threads the bilayer; the sequence is LYHACLASLSILVLLLLAMLV. Over 72 to 100 the chain is Cytoplasmic; that stretch reads RRRQLWPDCVRGRPGLPSPVDFLAGDRPR. The helical transmembrane segment at 101–121 threads the bilayer; that stretch reads AVPAAVFMVLLSSLCLLLPDE. Residues 122 to 144 are Extracellular-facing; it reads DALPFLTLASAPSQDGKTEAPRG. Residues 145-165 traverse the membrane as a helical segment; sequence AWKILGLFYYAALYYPLAACA. Residues 166-168 lie on the Cytoplasmic side of the membrane; sequence TAG. The helical transmembrane segment at 169 to 189 threads the bilayer; sequence HTAAHLLGSTLSWAHLGVQVW. At 190–205 the chain is on the extracellular side; the sequence is QRAECPQVPKIYKYYS. Residues 206 to 226 traverse the membrane as a helical segment; it reads LLASLPLLLGLGFLSLWYPVQ. Topologically, residues 227–295 are cytoplasmic; it reads LVRSFSRRTG…PQPGFHLPLK (69 aa). Residues 235-293 form an interaction with RBP1 region; that stretch reads TGAGSKGLQSSYSEEYLRNLLCRKKLGSSYHTSKHGFLSWARVCLRHCIYTPQPGFHLP. A helical membrane pass occupies residues 296–316; that stretch reads LVLSATLTGTAIYQVALLLLV. Over 317–367 the chain is Extracellular; the sequence is GVVPTIQKVRAGVTTDVSYLLAGFGIVLSEDKQEVVELVKHHLWALEVCYI. Residues 368–388 form a helical membrane-spanning segment; sequence SALVLSCLLTFLVLMRSLVTH. The Cytoplasmic segment spans residues 389–422; it reads RTNLRALHRGAALDLSPLHRSPHPSRQAIFCWMS. The helical transmembrane segment at 423 to 443 threads the bilayer; sequence FSAYQTAFICLGLLVQQIIFF. At 444-473 the chain is on the extracellular side; sequence LGTTALAFLVLMPVLHGRNLLLFRSLESSW. Residues 474-494 traverse the membrane as a helical segment; it reads PFWLTLALAVILQNMAAHWVF. The Cytoplasmic segment spans residues 495-509; it reads LETHDGHPQLTNRRV. An intramembrane region (helical) is located at residues 510 to 547; that stretch reads LYAATFLLFPLNVLVGAMVATWRVLLSALYNAIHLGQM. Topologically, residues 548 to 667 are cytoplasmic; the sequence is DLSLLPPRAA…ALLGANGAQP (120 aa). Tyrosine 643 carries the post-translational modification Phosphotyrosine.

As to quaternary structure, homodimer. Interacts with JAK2 and STAT5. Interacts (via extracellular domains) with RBP4. Interacts (via cytoplasmic domains) with RBP1. Post-translationally, phosphorylated on tyrosine residues in response to RBP4 binding. Phosphorylation requires the presence of LRAT, suggesting it may be triggered by the uptake of retinol that is then metabolized within the cell to retinoids that function as signaling molecules. In terms of tissue distribution, broad expression. In adult eye expressed in sclera, retina, retinal pigment epithelium, and trabecular meshwork but not in choroid and iris.

It is found in the cell membrane. Its function is as follows. Functions as a retinol transporter. Accepts all-trans retinol from the extracellular retinol-binding protein RBP4, facilitates retinol transport across the cell membrane, and then transfers retinol to the cytoplasmic retinol-binding protein RBP1. Retinol uptake is enhanced by LRAT, an enzyme that converts retinol to all-trans retinyl esters, the storage forms of vitamin A. Contributes to the activation of a signaling cascade that depends on retinol transport and LRAT-dependent generation of retinol metabolites that then trigger activation of JAK2 and its target STAT5, and ultimately increase the expression of SOCS3 and inhibit cellular responses to insulin. Important for the homeostasis of vitamin A and its derivatives, such as retinoic acid. STRA6-mediated transport is particularly important in the eye, and under conditions of dietary vitamin A deficiency. Does not transport retinoic acid. This Homo sapiens (Human) protein is Receptor for retinol uptake STRA6 (STRA6).